Here is a 236-residue protein sequence, read N- to C-terminus: Small ribosomal subunit protein uS2c (236 aa).

This sequence belongs to the universal ribosomal protein uS2 family.

The protein resides in the plastid. Its subcellular location is the chloroplast. The protein is Small ribosomal subunit protein uS2c (rps2) of Helianthus annuus (Common sunflower).